Here is a 458-residue protein sequence, read N- to C-terminus: Ribosomal protein uS12 methylthiotransferase RimO (458 aa).

The MTTase N-terminal domain maps to 26–136 (PRIGMVSLGC…VLDAVHGAVP (111 aa)). [4Fe-4S] cluster is bound by residues cysteine 35, cysteine 71, cysteine 100, cysteine 167, cysteine 171, and cysteine 174. Residues 153 to 389 (LTPRHYAYLK…MEKAQAISEA (237 aa)) form the Radical SAM core domain. The region spanning 392–458 (QAKVGRTMQV…SEYDLWGKLT (67 aa)) is the TRAM domain.

The protein belongs to the methylthiotransferase family. RimO subfamily. [4Fe-4S] cluster serves as cofactor.

It is found in the cytoplasm. The catalysed reaction is L-aspartate(89)-[ribosomal protein uS12]-hydrogen + (sulfur carrier)-SH + AH2 + 2 S-adenosyl-L-methionine = 3-methylsulfanyl-L-aspartate(89)-[ribosomal protein uS12]-hydrogen + (sulfur carrier)-H + 5'-deoxyadenosine + L-methionine + A + S-adenosyl-L-homocysteine + 2 H(+). In terms of biological role, catalyzes the methylthiolation of an aspartic acid residue of ribosomal protein uS12. In Jannaschia sp. (strain CCS1), this protein is Ribosomal protein uS12 methylthiotransferase RimO.